We begin with the raw amino-acid sequence, 83 residues long: Mu-theraphotoxin-Hhn2j 4 (83 aa).

Positions 1–21 are cleaved as a signal peptide; it reads MKASMFLALAGSVLLFVVGYA. A propeptide spanning residues 22–48 is cleaved from the precursor; it reads SESEEKEFPIELLSKIFAVDVFKGEER. Cystine bridges form between C50-C65, C57-C70, and C64-C77. L81 is subject to Leucine amide.

Belongs to the neurotoxin 10 (Hwtx-1) family. 15 (Hntx-3) subfamily. Monomer. Expressed by the venom gland.

Its subcellular location is the secreted. Its function is as follows. Lethal neurotoxin. Selectively blocks tetrodotoxin-sensitive voltage-gated sodium channels (Nav). Does not affect tetrodotoxin-resistant voltage-gated sodium channels or calcium channels. The chain is Mu-theraphotoxin-Hhn2j 4 from Cyriopagopus hainanus (Chinese bird spider).